Reading from the N-terminus, the 482-residue chain is Glutamate--tRNA ligase 2 (482 aa).

The 'HIGH' region signature appears at 8–18 (PSPTGQLHIGG). The short motif at 249 to 253 (KLSKR) is the 'KMSKS' region element. An ATP-binding site is contributed by lysine 252.

This sequence belongs to the class-I aminoacyl-tRNA synthetase family. Glutamate--tRNA ligase type 1 subfamily. As to quaternary structure, monomer.

It is found in the cytoplasm. It catalyses the reaction tRNA(Glu) + L-glutamate + ATP = L-glutamyl-tRNA(Glu) + AMP + diphosphate. In terms of biological role, catalyzes the attachment of glutamate to tRNA(Glu) in a two-step reaction: glutamate is first activated by ATP to form Glu-AMP and then transferred to the acceptor end of tRNA(Glu). The sequence is that of Glutamate--tRNA ligase 2 from Caldicellulosiruptor saccharolyticus (strain ATCC 43494 / DSM 8903 / Tp8T 6331).